A 289-amino-acid polypeptide reads, in one-letter code: G1/S-specific cyclin-D2 (289 aa).

One can recognise a Cyclin N-terminal domain in the interval 26–151 (VLQNLLTIEE…VVLGKLKWNL (126 aa)). The disordered stretch occupies residues 264–289 (DQRDGSKSEDELDQASTPTDVRDIDL). Ser271 bears the Phosphoserine mark. Thr280 bears the Phosphothreonine mark.

This sequence belongs to the cyclin family. Cyclin D subfamily. As to quaternary structure, interacts with either CDK4 or CDK6 protein kinase to form a serine/threonine kinase holoenzyme complex. The cyclin subunit imparts substrate specificity to the complex. In terms of processing, phosphorylation at Thr-280 by MAP kinases is required for ubiquitination and degradation by the DCX(AMBRA1) complex. Ubiquitinated by the DCX(AMBRA1) complex during the transition from G1 to S cell phase, leading to its degradation: ubiquitination is dependent on Thr-280 phosphorylation. The DCX(AMBRA1) complex represents the major regulator of CCND2 stability during the G1/S transition. Polyubiquitinated by the SCF(FBXL2) complex, leading to proteasomal degradation.

The protein resides in the nucleus. The protein localises to the cytoplasm. It is found in the nucleus membrane. Its function is as follows. Regulatory component of the cyclin D2-CDK4 (DC) complex that phosphorylates and inhibits members of the retinoblastoma (RB) protein family including RB1 and regulates the cell-cycle during G(1)/S transition. Phosphorylation of RB1 allows dissociation of the transcription factor E2F from the RB/E2F complex and the subsequent transcription of E2F target genes which are responsible for the progression through the G(1) phase. Hypophosphorylates RB1 in early G(1) phase. Cyclin D-CDK4 complexes are major integrators of various mitogenenic and antimitogenic signals. The sequence is that of G1/S-specific cyclin-D2 from Homo sapiens (Human).